The chain runs to 81 residues: uncharacterized protein (81 aa).

The N-terminal 20 residues, 1–20 (MYSRVLSVAAIVTMALAVQA), are a transit peptide targeting the mitochondrion. Positions 27–53 (YGNTTNSTGTTNGTNGTNTTTSSTATQ) are disordered. Over residues 28 to 53 (GNTTNSTGTTNGTNGTNTTTSSTATQ) the composition is skewed to low complexity. Residues 59–79 (ITNFSSGAFVIAMIAVACSVM) form a helical membrane-spanning segment.

The protein resides in the mitochondrion membrane. This is an uncharacterized protein from Schizosaccharomyces pombe (strain 972 / ATCC 24843) (Fission yeast).